A 208-amino-acid chain; its full sequence is Large ribosomal subunit protein bL9 (208 aa).

The interval K161–E208 is disordered. Residues V186 to S197 show a composition bias toward polar residues.

Belongs to the bacterial ribosomal protein bL9 family.

Its function is as follows. Binds to the 23S rRNA. In Ehrlichia canis (strain Jake), this protein is Large ribosomal subunit protein bL9.